Consider the following 549-residue polypeptide: Glucose-6-phosphate isomerase (549 aa).

Residue E353 is the Proton donor of the active site. Residues H384 and K513 contribute to the active site.

The protein belongs to the GPI family.

It is found in the cytoplasm. It carries out the reaction alpha-D-glucose 6-phosphate = beta-D-fructose 6-phosphate. The protein operates within carbohydrate biosynthesis; gluconeogenesis. Its pathway is carbohydrate degradation; glycolysis; D-glyceraldehyde 3-phosphate and glycerone phosphate from D-glucose: step 2/4. Catalyzes the reversible isomerization of glucose-6-phosphate to fructose-6-phosphate. This chain is Glucose-6-phosphate isomerase, found in Brucella melitensis biotype 2 (strain ATCC 23457).